The sequence spans 91 residues: Cell division protein ZapA (91 aa).

A coiled-coil region spans residues 59–86; that stretch reads TAVNIANEYLKLKEEYDRLAAKLRREKG.

It belongs to the ZapA family. Type 2 subfamily. As to quaternary structure, homodimer. Interacts with FtsZ.

The protein localises to the cytoplasm. Functionally, activator of cell division through the inhibition of FtsZ GTPase activity, therefore promoting FtsZ assembly into bundles of protofilaments necessary for the formation of the division Z ring. It is recruited early at mid-cell but it is not essential for cell division. The protein is Cell division protein ZapA of Geobacillus thermodenitrificans (strain NG80-2).